Reading from the N-terminus, the 476-residue chain is Exodeoxyribonuclease 7 large subunit (476 aa).

The protein belongs to the XseA family. In terms of assembly, heterooligomer composed of large and small subunits.

The protein localises to the cytoplasm. It catalyses the reaction Exonucleolytic cleavage in either 5'- to 3'- or 3'- to 5'-direction to yield nucleoside 5'-phosphates.. Bidirectionally degrades single-stranded DNA into large acid-insoluble oligonucleotides, which are then degraded further into small acid-soluble oligonucleotides. This chain is Exodeoxyribonuclease 7 large subunit, found in Bartonella tribocorum (strain CIP 105476 / IBS 506).